Reading from the N-terminus, the 140-residue chain is Peptide methionine sulfoxide reductase MsrB (140 aa).

The MsrB domain occupies 10 to 132; it reads EEDWKSVLTP…NSVSLGFTKE (123 aa). 4 residues coordinate Zn(2+): Cys49, Cys52, Cys98, and Cys101. The active-site Nucleophile is Cys121.

It belongs to the MsrB Met sulfoxide reductase family. Zn(2+) is required as a cofactor.

It catalyses the reaction L-methionyl-[protein] + [thioredoxin]-disulfide + H2O = L-methionyl-(R)-S-oxide-[protein] + [thioredoxin]-dithiol. This Methanosarcina mazei (strain ATCC BAA-159 / DSM 3647 / Goe1 / Go1 / JCM 11833 / OCM 88) (Methanosarcina frisia) protein is Peptide methionine sulfoxide reductase MsrB.